The following is a 442-amino-acid chain: 3-phosphoshikimate 1-carboxyvinyltransferase (442 aa).

3-phosphoshikimate-binding residues include Lys-25, Ser-26, and Arg-30. Phosphoenolpyruvate is bound at residue Lys-25. Gly-97 and Arg-125 together coordinate phosphoenolpyruvate. Ser-170, Ser-171, Gln-172, Asp-323, and Lys-350 together coordinate 3-phosphoshikimate. Phosphoenolpyruvate is bound at residue Gln-172. Asp-323 (proton acceptor) is an active-site residue. Positions 354 and 399 each coordinate phosphoenolpyruvate.

Belongs to the EPSP synthase family. As to quaternary structure, monomer.

The protein resides in the cytoplasm. It carries out the reaction 3-phosphoshikimate + phosphoenolpyruvate = 5-O-(1-carboxyvinyl)-3-phosphoshikimate + phosphate. It functions in the pathway metabolic intermediate biosynthesis; chorismate biosynthesis; chorismate from D-erythrose 4-phosphate and phosphoenolpyruvate: step 6/7. Functionally, catalyzes the transfer of the enolpyruvyl moiety of phosphoenolpyruvate (PEP) to the 5-hydroxyl of shikimate-3-phosphate (S3P) to produce enolpyruvyl shikimate-3-phosphate and inorganic phosphate. This is 3-phosphoshikimate 1-carboxyvinyltransferase from Bartonella tribocorum (strain CIP 105476 / IBS 506).